The primary structure comprises 334 residues: Glycerol-3-phosphate dehydrogenase [NAD(P)+] (334 aa).

The NADPH site is built by Trp-13, Arg-33, and Lys-106. Residues Lys-106, Gly-137, and Ser-139 each contribute to the sn-glycerol 3-phosphate site. Ala-141 lines the NADPH pocket. Residues Lys-192, Asp-245, Ser-255, Arg-256, and Asn-257 each contribute to the sn-glycerol 3-phosphate site. Catalysis depends on Lys-192, which acts as the Proton acceptor. Arg-256 serves as a coordination point for NADPH. Val-280 and Glu-282 together coordinate NADPH.

The protein belongs to the NAD-dependent glycerol-3-phosphate dehydrogenase family.

The protein resides in the cytoplasm. It catalyses the reaction sn-glycerol 3-phosphate + NAD(+) = dihydroxyacetone phosphate + NADH + H(+). It carries out the reaction sn-glycerol 3-phosphate + NADP(+) = dihydroxyacetone phosphate + NADPH + H(+). The protein operates within membrane lipid metabolism; glycerophospholipid metabolism. Functionally, catalyzes the reduction of the glycolytic intermediate dihydroxyacetone phosphate (DHAP) to sn-glycerol 3-phosphate (G3P), the key precursor for phospholipid synthesis. In Chlamydia felis (strain Fe/C-56) (Chlamydophila felis), this protein is Glycerol-3-phosphate dehydrogenase [NAD(P)+].